Consider the following 390-residue polypeptide: Galactokinase (390 aa).

33–36 (EHTD) serves as a coordination point for substrate. Residues serine 67 and 124–130 (GSGLSSS) contribute to the ATP site. Mg(2+) is bound by residues serine 130 and glutamate 162. The active-site Proton acceptor is the aspartate 174. Tyrosine 224 is a binding site for substrate.

This sequence belongs to the GHMP kinase family. GalK subfamily.

The protein localises to the cytoplasm. The catalysed reaction is alpha-D-galactose + ATP = alpha-D-galactose 1-phosphate + ADP + H(+). The protein operates within carbohydrate metabolism; galactose metabolism. In terms of biological role, catalyzes the transfer of the gamma-phosphate of ATP to D-galactose to form alpha-D-galactose-1-phosphate (Gal-1-P). This Streptococcus mutans serotype c (strain ATCC 700610 / UA159) protein is Galactokinase.